Consider the following 190-residue polypeptide: T-cell receptor gamma chain C region 5/10-13 (190 aa).

The segment at 1 to 157 (DKRTDSDFSP…LQVTTTYAFY (157 aa)) is c region. A helical membrane pass occupies residues 158-178 (TYLILFFKSMVHLAFVVFCLF). Topologically, residues 179 to 190 (RRAAMSCDDQRS) are cytoplasmic.

It localises to the membrane. The polypeptide is T-cell receptor gamma chain C region 5/10-13 (Mus musculus (Mouse)).